Consider the following 445-residue polypeptide: Phosphoglucosamine mutase (445 aa).

S102 (phosphoserine intermediate) is an active-site residue. Positions 102, 241, 243, and 245 each coordinate Mg(2+). The residue at position 102 (S102) is a Phosphoserine.

The protein belongs to the phosphohexose mutase family. Mg(2+) is required as a cofactor. In terms of processing, activated by phosphorylation.

It catalyses the reaction alpha-D-glucosamine 1-phosphate = D-glucosamine 6-phosphate. Its function is as follows. Catalyzes the conversion of glucosamine-6-phosphate to glucosamine-1-phosphate. The sequence is that of Phosphoglucosamine mutase from Hahella chejuensis (strain KCTC 2396).